The following is a 140-amino-acid chain: Acyl-coenzyme A thioesterase PaaI (140 aa).

As to quaternary structure, homotetramer.

It participates in aromatic compound metabolism; phenylacetate degradation. Functionally, thioesterase with a preference for ring-hydroxylated phenylacetyl-CoA esters. Hydrolyzes 3,4-dihydroxyphenylacetyl-CoA, 3-hydroxyphenylacetyl-CoA and 4-hydroxyphenylacetyl-CoA. Inactive towards 4-hydroxybenzoyl-CoA and 4-hydroxyphenacyl-CoA. The sequence is that of Acyl-coenzyme A thioesterase PaaI (paaI) from Escherichia coli (strain K12).